Consider the following 139-residue polypeptide: 2S seed storage albumin protein (139 aa).

The signal sequence occupies residues 1–15 (AALLVALLFVANAAA). IgE-binding regions lie at residues 16–30 (FRTTITTMEIDEDID), 29–34 (IDNPRR), 64–78 (GYDEDNQRQHFRQCC), 65–73 (YDEDNQRQH), 95–103 (QVVRRQQQQ), 99–111 (RQQQQQGLRGEEM), 102–114 (QQQGLRGEEMEEM), 105–117 (GLRGEEMEEMVQS), 112–126 (EEMVQSARDLPNECG), 125–136 (CGISSQRCEIRR), and 125–139 (CGISSQRCEIRRSWF). 2 propeptides span residues 16–31 (FRTTITTMEIDEDIDN) and 58–71 (QQSRSGGYDEDNQR). Intrachain disulfides connect cysteine 39-cysteine 88, cysteine 52-cysteine 77, cysteine 78-cysteine 125, and cysteine 90-cysteine 132. The interval 104-115 (QGLRGEEMEEMV) is immunodominant epitope. IgE-binding; binds to IgE in 75% of the 20 walnut-allergic patients tested. The segment at 107–110 (RGEE) is minimally required for IgE-binding by the immunodominant epitope. Positions 136-139 (RSWF) are excised as a propeptide.

Belongs to the 2S seed storage albumins family. As to quaternary structure, the mature protein consists of a small chain and a large chain linked by disulfide bonds. In terms of tissue distribution, expressed in seed (at protein level). Expressed in the peel of mature seed.

Its function is as follows. Seed storage protein. The polypeptide is 2S seed storage albumin protein (Juglans regia (English walnut)).